The sequence spans 249 residues: NAD(P)H-quinone oxidoreductase subunit T, chloroplastic (249 aa).

A chloroplast-targeting transit peptide spans Met-1–Ala-45. Positions Tyr-44–Asp-84 are disordered. The J domain maps to Ser-106 to Leu-172. Residues Leu-224–Phe-244 form a helical membrane-spanning segment.

As to quaternary structure, part of the chloroplast NDH complex, composed of a mixture of chloroplast and nucleus encoded subunits. Component of the electron donor-binding subcomplex, at least composed of NDHS, NDHT and NDHU.

It is found in the plastid. It localises to the chloroplast thylakoid membrane. The enzyme catalyses a plastoquinone + NADH + (n+1) H(+)(in) = a plastoquinol + NAD(+) + n H(+)(out). The catalysed reaction is a plastoquinone + NADPH + (n+1) H(+)(in) = a plastoquinol + NADP(+) + n H(+)(out). NDH shuttles electrons from NAD(P)H:plastoquinone, via FMN and iron-sulfur (Fe-S) centers, to quinones in the photosynthetic chain and possibly in a chloroplast respiratory chain. The immediate electron acceptor for the enzyme in this species is believed to be plastoquinone. Couples the redox reaction to proton translocation, and thus conserves the redox energy in a proton gradient. Required for the accumulation of both the NDH subcomplex A and NDHS. The chain is NAD(P)H-quinone oxidoreductase subunit T, chloroplastic from Arabidopsis thaliana (Mouse-ear cress).